We begin with the raw amino-acid sequence, 258 residues long: Imidazole glycerol phosphate synthase subunit HisF (258 aa).

Residues Asp-11 and Asp-130 contribute to the active site.

It belongs to the HisA/HisF family. Heterodimer of HisH and HisF.

Its subcellular location is the cytoplasm. The enzyme catalyses 5-[(5-phospho-1-deoxy-D-ribulos-1-ylimino)methylamino]-1-(5-phospho-beta-D-ribosyl)imidazole-4-carboxamide + L-glutamine = D-erythro-1-(imidazol-4-yl)glycerol 3-phosphate + 5-amino-1-(5-phospho-beta-D-ribosyl)imidazole-4-carboxamide + L-glutamate + H(+). It functions in the pathway amino-acid biosynthesis; L-histidine biosynthesis; L-histidine from 5-phospho-alpha-D-ribose 1-diphosphate: step 5/9. Functionally, IGPS catalyzes the conversion of PRFAR and glutamine to IGP, AICAR and glutamate. The HisF subunit catalyzes the cyclization activity that produces IGP and AICAR from PRFAR using the ammonia provided by the HisH subunit. This Nitrobacter hamburgensis (strain DSM 10229 / NCIMB 13809 / X14) protein is Imidazole glycerol phosphate synthase subunit HisF.